A 347-amino-acid chain; its full sequence is MIKLEGVSKTYGAGPTAVHALKNIDLDVPQGAIHGVIGLSGAGKSTLIRCVNLLERPTSGRVIVDGQDLTRQDAEALRQSRHQLGMIFQHFNLLASRTVFDNVALPLELMGVSKSDIRERVEPLLDLTGLTDKARQYPAQLSGGQKQRVAIARALASRPKVLLCDEATSALDPQTTASILELLQDINRKLGLTILLITHEMEVVKSICHRVGLISDGELVEEADVGDFFTAPATRLGRDFLNAFLELEPPQALVERLEETAGPHTHPVVRLAFSGATVATPLISRLARDSGVDVSILQAKVESIQGRTLGLMIAELIGSPDTTSRALTQLEAHDINVEVLGHVQRDA.

Residues 2–241 enclose the ABC transporter domain; it reads IKLEGVSKTY…PATRLGRDFL (240 aa). 38 to 45 is an ATP binding site; the sequence is GLSGAGKS.

The protein belongs to the ABC transporter superfamily. Methionine importer (TC 3.A.1.24) family. In terms of assembly, the complex is composed of two ATP-binding proteins (MetN), two transmembrane proteins (MetI) and a solute-binding protein (MetQ).

The protein localises to the cell inner membrane. It catalyses the reaction L-methionine(out) + ATP + H2O = L-methionine(in) + ADP + phosphate + H(+). It carries out the reaction D-methionine(out) + ATP + H2O = D-methionine(in) + ADP + phosphate + H(+). Part of the ABC transporter complex MetNIQ involved in methionine import. Responsible for energy coupling to the transport system. The sequence is that of Methionine import ATP-binding protein MetN from Chromohalobacter salexigens (strain ATCC BAA-138 / DSM 3043 / CIP 106854 / NCIMB 13768 / 1H11).